Here is a 232-residue protein sequence, read N- to C-terminus: Methylthioribulose-1-phosphate dehydratase (232 aa).

Residue cysteine 91 participates in substrate binding. Residues histidine 109, histidine 111, and histidine 191 each contribute to the Zn(2+) site.

The protein belongs to the aldolase class II family. MtnB subfamily. Requires Zn(2+) as cofactor.

It localises to the cytoplasm. The catalysed reaction is 5-(methylsulfanyl)-D-ribulose 1-phosphate = 5-methylsulfanyl-2,3-dioxopentyl phosphate + H2O. Its pathway is amino-acid biosynthesis; L-methionine biosynthesis via salvage pathway; L-methionine from S-methyl-5-thio-alpha-D-ribose 1-phosphate: step 2/6. Its function is as follows. Catalyzes the dehydration of methylthioribulose-1-phosphate (MTRu-1-P) into 2,3-diketo-5-methylthiopentyl-1-phosphate (DK-MTP-1-P). The protein is Methylthioribulose-1-phosphate dehydratase of Schizosaccharomyces japonicus (strain yFS275 / FY16936) (Fission yeast).